Consider the following 244-residue polypeptide: Cell division protein ZapD (244 aa).

This sequence belongs to the ZapD family. Interacts with FtsZ.

The protein resides in the cytoplasm. Functionally, cell division factor that enhances FtsZ-ring assembly. Directly interacts with FtsZ and promotes bundling of FtsZ protofilaments, with a reduction in FtsZ GTPase activity. This chain is Cell division protein ZapD, found in Shewanella sp. (strain MR-4).